Reading from the N-terminus, the 279-residue chain is Large ribosomal subunit protein uL2 (279 aa).

The segment at V223–R279 is disordered. The segment covering L269–R279 has biased composition (basic residues).

The protein belongs to the universal ribosomal protein uL2 family. Part of the 50S ribosomal subunit. Forms a bridge to the 30S subunit in the 70S ribosome.

One of the primary rRNA binding proteins. Required for association of the 30S and 50S subunits to form the 70S ribosome, for tRNA binding and peptide bond formation. It has been suggested to have peptidyltransferase activity; this is somewhat controversial. Makes several contacts with the 16S rRNA in the 70S ribosome. This chain is Large ribosomal subunit protein uL2, found in Paracoccus denitrificans (strain Pd 1222).